The sequence spans 119 residues: Large ribosomal subunit protein bL20 (119 aa).

The protein belongs to the bacterial ribosomal protein bL20 family.

In terms of biological role, binds directly to 23S ribosomal RNA and is necessary for the in vitro assembly process of the 50S ribosomal subunit. It is not involved in the protein synthesizing functions of that subunit. The protein is Large ribosomal subunit protein bL20 of Nitrobacter winogradskyi (strain ATCC 25391 / DSM 10237 / CIP 104748 / NCIMB 11846 / Nb-255).